Reading from the N-terminus, the 209-residue chain is A-type ATP synthase subunit D (209 aa).

It belongs to the V-ATPase D subunit family. Has multiple subunits with at least A(3), B(3), C, D, E, F, H, I and proteolipid K(x).

Its subcellular location is the cell membrane. Its function is as follows. Component of the A-type ATP synthase that produces ATP from ADP in the presence of a proton gradient across the membrane. This is A-type ATP synthase subunit D from Methanosarcina acetivorans (strain ATCC 35395 / DSM 2834 / JCM 12185 / C2A).